Consider the following 557-residue polypeptide: Formate--tetrahydrofolate ligase 2 (557 aa).

66 to 73 is a binding site for ATP; sequence TPAGEGKT.

It belongs to the formate--tetrahydrofolate ligase family.

The enzyme catalyses (6S)-5,6,7,8-tetrahydrofolate + formate + ATP = (6R)-10-formyltetrahydrofolate + ADP + phosphate. It functions in the pathway one-carbon metabolism; tetrahydrofolate interconversion. This Streptococcus pyogenes serotype M12 (strain MGAS9429) protein is Formate--tetrahydrofolate ligase 2.